A 253-amino-acid chain; its full sequence is Ubiquinone/menaquinone biosynthesis C-methyltransferase UbiE (253 aa).

Residues Thr-76, Asp-97, and 125 to 126 contribute to the S-adenosyl-L-methionine site; that span reads NA.

This sequence belongs to the class I-like SAM-binding methyltransferase superfamily. MenG/UbiE family.

The catalysed reaction is a 2-demethylmenaquinol + S-adenosyl-L-methionine = a menaquinol + S-adenosyl-L-homocysteine + H(+). The enzyme catalyses a 2-methoxy-6-(all-trans-polyprenyl)benzene-1,4-diol + S-adenosyl-L-methionine = a 5-methoxy-2-methyl-3-(all-trans-polyprenyl)benzene-1,4-diol + S-adenosyl-L-homocysteine + H(+). It participates in quinol/quinone metabolism; menaquinone biosynthesis; menaquinol from 1,4-dihydroxy-2-naphthoate: step 2/2. It functions in the pathway cofactor biosynthesis; ubiquinone biosynthesis. In terms of biological role, methyltransferase required for the conversion of demethylmenaquinol (DMKH2) to menaquinol (MKH2) and the conversion of 2-polyprenyl-6-methoxy-1,4-benzoquinol (DDMQH2) to 2-polyprenyl-3-methyl-6-methoxy-1,4-benzoquinol (DMQH2). In Stenotrophomonas maltophilia (strain R551-3), this protein is Ubiquinone/menaquinone biosynthesis C-methyltransferase UbiE.